Here is a 317-residue protein sequence, read N- to C-terminus: Porphobilinogen deaminase (317 aa).

S-(dipyrrolylmethanemethyl)cysteine is present on C245.

It belongs to the HMBS family. Monomer. Dipyrromethane is required as a cofactor.

It carries out the reaction 4 porphobilinogen + H2O = hydroxymethylbilane + 4 NH4(+). It functions in the pathway porphyrin-containing compound metabolism; protoporphyrin-IX biosynthesis; coproporphyrinogen-III from 5-aminolevulinate: step 2/4. It participates in porphyrin-containing compound metabolism; chlorophyll biosynthesis. Its function is as follows. Tetrapolymerization of the monopyrrole PBG into the hydroxymethylbilane pre-uroporphyrinogen in several discrete steps. The protein is Porphobilinogen deaminase of Parasynechococcus marenigrum (strain WH8102).